The chain runs to 406 residues: Tyrosine--tRNA ligase (406 aa).

The 'HIGH' region signature appears at 48-57; the sequence is PSRPDLHLGH. The 'KMSKS' region motif lies at 232–236; that stretch reads KMSKS. K235 serves as a coordination point for ATP. One can recognise an S4 RNA-binding domain in the interval 339–401; that stretch reads MPVVELLMAL…GKRKFFKVAR (63 aa).

The protein belongs to the class-I aminoacyl-tRNA synthetase family. TyrS type 2 subfamily. Homodimer.

The protein resides in the cytoplasm. It carries out the reaction tRNA(Tyr) + L-tyrosine + ATP = L-tyrosyl-tRNA(Tyr) + AMP + diphosphate + H(+). Functionally, catalyzes the attachment of tyrosine to tRNA(Tyr) in a two-step reaction: tyrosine is first activated by ATP to form Tyr-AMP and then transferred to the acceptor end of tRNA(Tyr). This is Tyrosine--tRNA ligase from Chlorobaculum tepidum (strain ATCC 49652 / DSM 12025 / NBRC 103806 / TLS) (Chlorobium tepidum).